A 461-amino-acid polypeptide reads, in one-letter code: TWiK family of potassium channels protein 18 (461 aa).

Residues 1-21 (MAIVAQGVSTILTTFQKTFKG) are Cytoplasmic-facing. A helical membrane pass occupies residues 22–42 (LLPLIILVAYTLLGAWIFWMI). Asn-88 carries N-linked (GlcNAc...) asparagine glycosylation. Residues 116-136 (FLGSIFYCMTVYTTIGYGNIV) constitute an intramembrane region (pore-forming). A helical membrane pass occupies residues 144–164 (FATILYAFIGIPLTVLSLYCL). The Cytoplasmic portion of the chain corresponds to 165 to 224 (GSLFAKGCKMLWRFFLKSTRVVSKDLSNKISEAADNIEEGTTAITPSAEKTENNDDDLLS). A helical transmembrane segment spans residues 225–245 (FPISGLLLITVIWVIFCAVLF). Residues 253–273 (FGTSLYFTLISFTTIGFGDIL) constitute an intramembrane region (pore-forming). A helical transmembrane segment spans residues 281-301 (PIVGVLLLIGLSLVSTVMTLI). Residues 302 to 461 (QQQIEALASG…GNEDYLEHDI (160 aa)) are Cytoplasmic-facing. A disordered region spans residues 328–347 (REDGEVDEHVDPEEDPENNK).

This sequence belongs to the two pore domain potassium channel (TC 1.A.1.8) family. In terms of tissue distribution, expressed in body wall muscle.

The protein resides in the membrane. Functionally, outwardly rectifying potassium channel protein; activity is sharply augmented by increase in temperature. This chain is TWiK family of potassium channels protein 18 (twk-18), found in Caenorhabditis elegans.